Reading from the N-terminus, the 544-residue chain is Exodeoxyribonuclease 7 large subunit (544 aa).

The segment at 522-544 (PETPPKSRKADNPPEPPEQTSFL) is disordered.

It belongs to the XseA family. Heterooligomer composed of large and small subunits.

Its subcellular location is the cytoplasm. The enzyme catalyses Exonucleolytic cleavage in either 5'- to 3'- or 3'- to 5'-direction to yield nucleoside 5'-phosphates.. In terms of biological role, bidirectionally degrades single-stranded DNA into large acid-insoluble oligonucleotides, which are then degraded further into small acid-soluble oligonucleotides. This chain is Exodeoxyribonuclease 7 large subunit, found in Zymomonas mobilis subsp. mobilis (strain ATCC 31821 / ZM4 / CP4).